The chain runs to 437 residues: UDP-N-acetylmuramoylalanine--D-glutamate ligase (437 aa).

112–118 (GSNGKST) is an ATP binding site.

Belongs to the MurCDEF family.

The protein localises to the cytoplasm. The enzyme catalyses UDP-N-acetyl-alpha-D-muramoyl-L-alanine + D-glutamate + ATP = UDP-N-acetyl-alpha-D-muramoyl-L-alanyl-D-glutamate + ADP + phosphate + H(+). The protein operates within cell wall biogenesis; peptidoglycan biosynthesis. Cell wall formation. Catalyzes the addition of glutamate to the nucleotide precursor UDP-N-acetylmuramoyl-L-alanine (UMA). This chain is UDP-N-acetylmuramoylalanine--D-glutamate ligase, found in Haemophilus influenzae (strain 86-028NP).